A 186-amino-acid chain; its full sequence is Quinone reductase (186 aa).

FMN is bound by residues 13-20, 80-83, and S116; these read SLRKESYN and EYNR.

It belongs to the SsuE family. Homotetramer. Dimer of dimers. The tetrameric configuration has a central role in chromate reductase activity. The cofactor is FMN.

It carries out the reaction a quinone + NADH + H(+) = a quinol + NAD(+). The enzyme catalyses a quinone + NADPH + H(+) = a quinol + NADP(+). It catalyses the reaction Cr(6+) + 2 NADH + O2 = Cr(3+) + superoxide + 2 NAD(+) + 2 H(+). The catalysed reaction is Cr(6+) + 2 NADPH + O2 = Cr(3+) + superoxide + 2 NADP(+) + 2 H(+). May be inhibited by divalent cations. In terms of biological role, catalyzes the reduction of quinones. Acts by simultaneous two-electron transfer, avoiding formation of highly reactive semiquinone intermediates and producing quinols that promote tolerance of H(2)O(2). Quinone reduction is probably the primary biological role of ChrR. Can also reduce toxic chromate to insoluble and less toxic Cr(3+). Catalyzes the transfer of three electrons to Cr(6+) producing Cr(3+) and one electron to molecular oxygen. This reaction produces transiently a minimal amount of the toxic Cr(5+) species and reactive oxygen species (ROS). Chromate reduction protects the cell against chromate toxicity, but is likely a secondary activity. Can also reduce potassium ferricyanide and 2,6-dichloroindophenol. During chromate reduction, displays an eightfold preference for NADH over NADPH. The sequence is that of Quinone reductase from Pseudomonas putida (strain ATCC 47054 / DSM 6125 / CFBP 8728 / NCIMB 11950 / KT2440).